The primary structure comprises 186 residues: Threonylcarbamoyl-AMP synthase (186 aa).

Residues 1–186 form the YrdC-like domain; that stretch reads MADTWEAAHS…LNNQVFRDDA (186 aa).

Belongs to the SUA5 family. TsaC subfamily.

Its subcellular location is the cytoplasm. It carries out the reaction L-threonine + hydrogencarbonate + ATP = L-threonylcarbamoyladenylate + diphosphate + H2O. Functionally, required for the formation of a threonylcarbamoyl group on adenosine at position 37 (t(6)A37) in tRNAs that read codons beginning with adenine. Catalyzes the conversion of L-threonine, HCO(3)(-)/CO(2) and ATP to give threonylcarbamoyl-AMP (TC-AMP) as the acyladenylate intermediate, with the release of diphosphate. The chain is Threonylcarbamoyl-AMP synthase from Idiomarina loihiensis (strain ATCC BAA-735 / DSM 15497 / L2-TR).